The primary structure comprises 251 residues: tRNA (guanine-N(7)-)-methyltransferase (251 aa).

Residues Gly-71, 94 to 95 (EL), 128 to 129 (NS), and Leu-148 each bind S-adenosyl-L-methionine. Asp-151 is a catalytic residue. Position 226 to 228 (226 to 228 (TEE)) interacts with S-adenosyl-L-methionine.

This sequence belongs to the class I-like SAM-binding methyltransferase superfamily. TrmB family.

The protein resides in the nucleus. The catalysed reaction is guanosine(46) in tRNA + S-adenosyl-L-methionine = N(7)-methylguanosine(46) in tRNA + S-adenosyl-L-homocysteine. Its pathway is tRNA modification; N(7)-methylguanine-tRNA biosynthesis. Functionally, catalyzes the formation of N(7)-methylguanine at position 46 (m7G46) in tRNA. This is tRNA (guanine-N(7)-)-methyltransferase from Arabidopsis thaliana (Mouse-ear cress).